Reading from the N-terminus, the 295-residue chain is Pantothenate synthetase (295 aa).

His37 (proton donor) is an active-site residue. Residue Gln61 coordinates (R)-pantoate. Gln61 contacts beta-alanine. ATP is bound at residue 154 to 157 (GRKD). Gln160 is a (R)-pantoate binding site. ATP is bound by residues Val183 and 191-194 (QSSR).

It belongs to the pantothenate synthetase family. Homodimer.

The protein resides in the cytoplasm. The catalysed reaction is (R)-pantoate + beta-alanine + ATP = (R)-pantothenate + AMP + diphosphate + H(+). Its pathway is cofactor biosynthesis; (R)-pantothenate biosynthesis; (R)-pantothenate from (R)-pantoate and beta-alanine: step 1/1. Functionally, catalyzes the condensation of pantoate with beta-alanine in an ATP-dependent reaction via a pantoyl-adenylate intermediate. This chain is Pantothenate synthetase, found in Salinibacter ruber (strain DSM 13855 / M31).